The primary structure comprises 396 residues: MTQMETQETLSARFLAQQDIQLNLIEKDSKNLKDHIDYWESMRKEQVLAFYAKKENMSRLGLQPLPPAKVSEQKAKDAIRIQLLLQSLYKSDFGSEPWTLSECSLEMLNAPPRNCFKKQPFTVTVQFDNDPKNVYPYICYEYIYYQDDRDKWHKVKGLVDHNGLYFKEVTGDSVYFKLFQPDATVYGKSGQWTVIFKNKTIHSSVTSSSRSAFGPADEQPGPSTSYDKSQQERSGSGQPKALQDTEPPTSTSTVRLRRGRREREHHSYRHRKSQSELGADSAPTPEEVGRRSHTVAAHGLSRLRRLQEEARDPPVLIITGQQNNLKCWRYRFSQKYADLYECCSSAWKWLGPKSEGYRGDAKLLIAFKNPEQRLSFLNTVGLPKNTTYSMGHLDSL.

A transactivation domain region spans residues 1–208; it reads MTQMETQETL…KTIHSSVTSS (208 aa). A disordered region spans residues 206–292; the sequence is TSSSRSAFGP…PTPEEVGRRS (87 aa). Polar residues predominate over residues 221–237; that stretch reads GPSTSYDKSQQERSGSG. The interval 312–396 is DNA-binding domain; the sequence is DPPVLIITGQ…TYSMGHLDSL (85 aa).

Belongs to the papillomaviridae E2 protein family. Binds DNA as homodimer. Interacts with protein E1; this interaction greatly increases E1 DNA-binding activity. Interacts with protein L1; this interaction enhances E2-dependent replication and transcription activation. Interacts with protein L2; this interaction inhibits E2 transcriptional activity but not DNA replication function E2. Interacts with protein E7; this interaction inhibits E7 oncogenic activity. Interacts with host TAF1; this interaction modulates E2-dependent transcriptional regulation. Interacts with host BRD4; this interaction mediates E2 transcriptional activation function. Additionally, the interaction with host BRD4 on mitotic chromosomes mediates tethering of the viral genome. Interacts with host TOPBP1; this interaction is required for optimal viral DNA replication. Post-translationally, phosphorylated.

The protein resides in the host nucleus. Its function is as follows. Plays a role in the initiation of viral DNA replication. A dimer of E2 interacts with a dimer of E1 in order to improve specificity of E1 DNA binding activity. Once the complex recognizes and binds DNA at specific sites, the E2 dimer is removed from DNA. E2 also regulates viral transcription through binding to the E2RE response element (5'-ACCNNNNNNGGT-3') present in multiple copies in the regulatory regions of the viral genome. Activates or represses transcription depending on E2RE's position with regards to proximal promoter elements including the TATA-box. Repression occurs by sterically hindering the assembly of the transcription initiation complex. The sequence is that of Regulatory protein E2 from Human papillomavirus type 50.